The primary structure comprises 425 residues: 2-methylserine hydroxymethyltransferase (425 aa).

(6S)-5,6,7,8-tetrahydrofolate is bound by residues leucine 126 and 130–132; that span reads GHL. At lysine 235 the chain carries N6-(pyridoxal phosphate)lysine. (6S)-5,6,7,8-tetrahydrofolate is bound at residue glutamate 251.

This sequence belongs to the SHMT family. In terms of assembly, homodimer. The cofactor is pyridoxal 5'-phosphate.

Its subcellular location is the cytoplasm. The catalysed reaction is (6R)-5,10-methylene-5,6,7,8-tetrahydrofolate + D-alanine + H2O = 2-methylserine + (6S)-5,6,7,8-tetrahydrofolate. The protein operates within one-carbon metabolism; tetrahydrofolate interconversion. Functionally, catalyzes the reversible interconversion of alpha-methyl-L-serine to D-alanine with tetrahydrofolate (THF) serving as the one-carbon carrier. Cannot use alpha-methyl-D-serine, L-serine, D-serine or L-alanine. The sequence is that of 2-methylserine hydroxymethyltransferase from Ensifer sp.